The primary structure comprises 197 residues: MTAATKATEYPSAVAKARFVRVSPRKARRVIDLVRGRSVSDALDILRWAPQAASGPVAKVIASAAANAQNNGGLDPATLVVATVYADQGPTAKRIRPRAQGRAFRIRRRTSHITVVVESRPAKDQRSAKSSRARRTEASKAASKVGATAPAKKAAAKAPAKKAPASSGVKKTPAKKAPAKKAPAKASETSAAKGGSD.

Residues 118–197 (ESRPAKDQRS…ETSAAKGGSD (80 aa)) are disordered. The segment covering 149–165 (APAKKAAAKAPAKKAPA) has biased composition (low complexity). Basic residues predominate over residues 172–183 (TPAKKAPAKKAP). Residues 184 to 197 (AKASETSAAKGGSD) show a composition bias toward low complexity.

The protein belongs to the universal ribosomal protein uL22 family. In terms of assembly, part of the 50S ribosomal subunit.

In terms of biological role, this protein binds specifically to 23S rRNA; its binding is stimulated by other ribosomal proteins, e.g. L4, L17, and L20. It is important during the early stages of 50S assembly. It makes multiple contacts with different domains of the 23S rRNA in the assembled 50S subunit and ribosome. Its function is as follows. The globular domain of the protein is located near the polypeptide exit tunnel on the outside of the subunit, while an extended beta-hairpin is found that lines the wall of the exit tunnel in the center of the 70S ribosome. The sequence is that of Large ribosomal subunit protein uL22 from Mycobacterium bovis (strain ATCC BAA-935 / AF2122/97).